The primary structure comprises 383 residues: Protein arginine N-methyltransferase PRMT10 (383 aa).

Positions 1–23 are disordered; sequence MRSSQNGGAMGGRAAGTGGGGPS. Positions 8–22 are enriched in gly residues; sequence GAMGGRAAGTGGGGP. The SAM-dependent MTase PRMT-type domain maps to 29–360; that stretch reads EVDYAQYFCT…KENHRLMEIE (332 aa). S-adenosyl-L-methionine is bound by residues glutamine 45, arginine 54, glycine 78, glutamate 100, and glutamate 129. Active-site residues include glutamate 143 and glutamate 152. The tract at residues 190–230 is dimerization arm; the sequence is DRKRNDFDGAMADWHNFSDEIKSYYGVDMGVLTKPFAEEQE.

It belongs to the class I-like SAM-binding methyltransferase superfamily. Protein arginine N-methyltransferase family. Ring-like homodimer.

The catalysed reaction is L-arginyl-[protein] + 2 S-adenosyl-L-methionine = N(omega),N(omega)-dimethyl-L-arginyl-[protein] + 2 S-adenosyl-L-homocysteine + 2 H(+). In terms of biological role, methylates (mono and asymmetric dimethylation) the guanidino nitrogens of arginyl residues in some proteins. Essential for regulating flowering time. The chain is Protein arginine N-methyltransferase PRMT10 (PRMT10) from Arabidopsis thaliana (Mouse-ear cress).